Consider the following 206-residue polypeptide: MGKYKKFFAIAVCSLLLFTVYFYRDPDRVITKGNNIILSPADGTVEYIKFYENGNPEVFKDGNCYVLNVSRYFPNGCYVVGIFMSPLDVHVNRAPIGGRIVYIKHIDGSFYPAFLEGVEKINERNIVIIKNGSEYVGVVQIAGFVARRCWLSIKEGECINMGQKIGMIKLGSQTAVIIPANYNITVKVGERVYAGQTIIAVKRTDN.

The active-site Schiff-base intermediate with substrate; via pyruvic acid is the Ser172. The residue at position 172 (Ser172) is a Pyruvic acid (Ser); by autocatalysis.

The protein belongs to the phosphatidylserine decarboxylase family. PSD-A subfamily. As to quaternary structure, heterodimer of a large membrane-associated beta subunit and a small pyruvoyl-containing alpha subunit. Pyruvate serves as cofactor. In terms of processing, is synthesized initially as an inactive proenzyme. Formation of the active enzyme involves a self-maturation process in which the active site pyruvoyl group is generated from an internal serine residue via an autocatalytic post-translational modification. Two non-identical subunits are generated from the proenzyme in this reaction, and the pyruvate is formed at the N-terminus of the alpha chain, which is derived from the carboxyl end of the proenzyme. The post-translation cleavage follows an unusual pathway, termed non-hydrolytic serinolysis, in which the side chain hydroxyl group of the serine supplies its oxygen atom to form the C-terminus of the beta chain, while the remainder of the serine residue undergoes an oxidative deamination to produce ammonia and the pyruvoyl prosthetic group on the alpha chain.

It is found in the cell membrane. It carries out the reaction archaetidylserine + H(+) = archaetidylethanolamine + CO2. Functionally, catalyzes the formation of archaetidylethanolamine (PtdEtn) from archaetidylserine (PtdSer). The protein is Putative archaetidylserine decarboxylase proenzyme of Methanocaldococcus jannaschii (strain ATCC 43067 / DSM 2661 / JAL-1 / JCM 10045 / NBRC 100440) (Methanococcus jannaschii).